A 352-amino-acid chain; its full sequence is Photosystem II D2 protein (352 aa).

A helical transmembrane segment spans residues 40 to 60; it reads CAFLSIGGWLTGTTFVTSWYT. Chlorophyll a is bound at residue His117. The chain crosses the membrane as a helical span at residues 124–140; that stretch reads GFCLRQIEIARLVGIRP. Pheophytin a-binding residues include Gln129 and Asn142. Residues 152–165 form a helical membrane-spanning segment; the sequence is VFVSVFLMYPLGQS. Chlorophyll a is bound at residue His197. The helical transmembrane segment at 207–227 threads the bilayer; that stretch reads GALLCAIHGATVENTLFQDGE. A plastoquinone contacts are provided by His214 and Phe261. Fe cation is bound at residue His214. Residue His268 coordinates Fe cation. The chain crosses the membrane as a helical span at residues 278 to 294; the sequence is GLWMSSIGIVGLAFNLR.

Belongs to the reaction center PufL/M/PsbA/D family. PSII is composed of 1 copy each of membrane proteins PsbA, PsbB, PsbC, PsbD, PsbE, PsbF, PsbH, PsbI, PsbJ, PsbK, PsbL, PsbM, PsbT, PsbX, PsbY, PsbZ, Psb30/Ycf12, peripheral proteins PsbO, CyanoQ (PsbQ), PsbU, PsbV and a large number of cofactors. It forms dimeric complexes. Requires The D1/D2 heterodimer binds P680, chlorophylls that are the primary electron donor of PSII, and subsequent electron acceptors. It shares a non-heme iron and each subunit binds pheophytin, quinone, additional chlorophylls, carotenoids and lipids. There is also a Cl(-1) ion associated with D1 and D2, which is required for oxygen evolution. The PSII complex binds additional chlorophylls, carotenoids and specific lipids. as cofactor.

The protein localises to the cellular thylakoid membrane. The enzyme catalyses 2 a plastoquinone + 4 hnu + 2 H2O = 2 a plastoquinol + O2. Photosystem II (PSII) is a light-driven water:plastoquinone oxidoreductase that uses light energy to abstract electrons from H(2)O, generating O(2) and a proton gradient subsequently used for ATP formation. It consists of a core antenna complex that captures photons, and an electron transfer chain that converts photonic excitation into a charge separation. The D1/D2 (PsbA/PsbD) reaction center heterodimer binds P680, the primary electron donor of PSII as well as several subsequent electron acceptors. D2 is needed for assembly of a stable PSII complex. The polypeptide is Photosystem II D2 protein (Trichodesmium erythraeum (strain IMS101)).